A 432-amino-acid chain; its full sequence is Adenylosuccinate synthetase (432 aa).

GTP is bound by residues 13–19 and 41–43; these read GDEGKGK and GHT. The active-site Proton acceptor is the Asp-14. Mg(2+)-binding residues include Asp-14 and Gly-41. Residues 14 to 17, 39 to 42, Thr-130, Arg-144, Gln-225, Thr-240, and Arg-304 contribute to the IMP site; these read DEGK and NAGH. The active-site Proton donor is His-42. 300-306 lines the substrate pocket; the sequence is AVTGRPR. GTP contacts are provided by residues Arg-306, 332-334, and 415-417; these read KLD and STG.

Belongs to the adenylosuccinate synthetase family. In terms of assembly, homodimer. Mg(2+) is required as a cofactor.

It localises to the cytoplasm. The catalysed reaction is IMP + L-aspartate + GTP = N(6)-(1,2-dicarboxyethyl)-AMP + GDP + phosphate + 2 H(+). It functions in the pathway purine metabolism; AMP biosynthesis via de novo pathway; AMP from IMP: step 1/2. Functionally, plays an important role in the de novo pathway of purine nucleotide biosynthesis. Catalyzes the first committed step in the biosynthesis of AMP from IMP. This Haemophilus influenzae (strain PittEE) protein is Adenylosuccinate synthetase.